The following is a 176-amino-acid chain: NAD(P)H-quinone oxidoreductase subunit 6, chloroplastic (176 aa).

A run of 5 helical transmembrane segments spans residues 10 to 30 (FLLV…VLLT), 32 to 52 (PIYS…FYIL), 61 to 81 (AQLL…VMFM), 92 to 112 (LWTV…VSLM), and 152 to 172 (FFLP…GAIA).

It belongs to the complex I subunit 6 family. NDH is composed of at least 16 different subunits, 5 of which are encoded in the nucleus.

The protein resides in the plastid. The protein localises to the chloroplast thylakoid membrane. It carries out the reaction a plastoquinone + NADH + (n+1) H(+)(in) = a plastoquinol + NAD(+) + n H(+)(out). The catalysed reaction is a plastoquinone + NADPH + (n+1) H(+)(in) = a plastoquinol + NADP(+) + n H(+)(out). NDH shuttles electrons from NAD(P)H:plastoquinone, via FMN and iron-sulfur (Fe-S) centers, to quinones in the photosynthetic chain and possibly in a chloroplast respiratory chain. The immediate electron acceptor for the enzyme in this species is believed to be plastoquinone. Couples the redox reaction to proton translocation, and thus conserves the redox energy in a proton gradient. The sequence is that of NAD(P)H-quinone oxidoreductase subunit 6, chloroplastic (ndhG) from Eucalyptus globulus subsp. globulus (Tasmanian blue gum).